The sequence spans 249 residues: Probable transcriptional regulatory protein CYA_2259 (249 aa).

It belongs to the TACO1 family.

It is found in the cytoplasm. This Synechococcus sp. (strain JA-3-3Ab) (Cyanobacteria bacterium Yellowstone A-Prime) protein is Probable transcriptional regulatory protein CYA_2259.